A 79-amino-acid polypeptide reads, in one-letter code: Small ribosomal subunit protein bS18 (79 aa).

The protein belongs to the bacterial ribosomal protein bS18 family. As to quaternary structure, part of the 30S ribosomal subunit. Forms a tight heterodimer with protein bS6.

Binds as a heterodimer with protein bS6 to the central domain of the 16S rRNA, where it helps stabilize the platform of the 30S subunit. This chain is Small ribosomal subunit protein bS18, found in Streptococcus pneumoniae serotype 19F (strain G54).